The primary structure comprises 253 residues: 3-deoxy-manno-octulosonate cytidylyltransferase (253 aa).

It belongs to the KdsB family.

The protein resides in the cytoplasm. The catalysed reaction is 3-deoxy-alpha-D-manno-oct-2-ulosonate + CTP = CMP-3-deoxy-beta-D-manno-octulosonate + diphosphate. It functions in the pathway nucleotide-sugar biosynthesis; CMP-3-deoxy-D-manno-octulosonate biosynthesis; CMP-3-deoxy-D-manno-octulosonate from 3-deoxy-D-manno-octulosonate and CTP: step 1/1. Its pathway is bacterial outer membrane biogenesis; lipopolysaccharide biosynthesis. In terms of biological role, activates KDO (a required 8-carbon sugar) for incorporation into bacterial lipopolysaccharide in Gram-negative bacteria. The polypeptide is 3-deoxy-manno-octulosonate cytidylyltransferase (Acinetobacter baumannii (strain SDF)).